The primary structure comprises 295 residues: Small ribosomal subunit protein uS2 (295 aa).

Residues 242 to 295 (APVEPTLARELAPEAPAPEAPAEEAPAAEAAPAAEAAPAAEAAPAEASSEEQAG) form a disordered region. The span at 264–288 (EEAPAAEAAPAAEAAPAAEAAPAEA) shows a compositional bias: low complexity.

It belongs to the universal ribosomal protein uS2 family.

This chain is Small ribosomal subunit protein uS2, found in Phenylobacterium zucineum (strain HLK1).